We begin with the raw amino-acid sequence, 71 residues long: U3-scytotoxin-Sth1h (71 aa).

The N-terminal stretch at 1-33 (MSQNSITSYKMGFAKHFFLFAVLLCATAMYSVA) is a signal peptide. A propeptide spanning residues 34 to 39 (EPAQER) is cleaved from the precursor. Intrachain disulfides connect cysteine 46-cysteine 60, cysteine 53-cysteine 64, and cysteine 59-cysteine 69.

In terms of tissue distribution, expressed by the venom gland.

The protein localises to the secreted. Functionally, probable insect neurotoxin with ion channel impairing activity. Does not show activity on 45 human receptors from 9 families (5-hydroxytryptamine, adrenergic, dopamine, muscarinic, histamine, neurotransmitter, opioid, sigma, and gaba(A) receptors). In vivo, when mixed with U3-SYTX-Sth1a does not cause paralytic or lethal activity when injected into crickets. It is noteworthy that crickets are evolutionarily distant from prey species. The polypeptide is U3-scytotoxin-Sth1h (Scytodes thoracica (Spitting spider)).